The chain runs to 128 residues: Protein ApaG (128 aa).

The ApaG domain maps to 1–123 (MTSSPDITVS…FRLDIAPESG (123 aa)).

In Deinococcus radiodurans (strain ATCC 13939 / DSM 20539 / JCM 16871 / CCUG 27074 / LMG 4051 / NBRC 15346 / NCIMB 9279 / VKM B-1422 / R1), this protein is Protein ApaG.